The chain runs to 77 residues: Small ribosomal subunit protein bS18 (77 aa).

Belongs to the bacterial ribosomal protein bS18 family. Part of the 30S ribosomal subunit. Forms a tight heterodimer with protein bS6.

Functionally, binds as a heterodimer with protein bS6 to the central domain of the 16S rRNA, where it helps stabilize the platform of the 30S subunit. The chain is Small ribosomal subunit protein bS18 from Bacillus cereus (strain ATCC 10987 / NRS 248).